Reading from the N-terminus, the 102-residue chain is MQFLAVAALLFTTALAAPSSDVNGIIRRANAFCPEGLLYTNPLCCDLDVLGVADVDCVVPPAKPSSCKSFGSVCASIGRKPRCCAVPVAGVALLCTDPIPAI.

Positions 1-16 (MQFLAVAALLFTTALA) are cleaved as a signal peptide. 4 cysteine pairs are disulfide-bonded: Cys-33-Cys-83, Cys-44-Cys-74, Cys-45-Cys-57, and Cys-84-Cys-95.

It belongs to the cerato-ulmin hydrophobin family. As to quaternary structure, homotetramer. Further self-assembles to form highly ordered films at water-air interfaces through intermolecular interactions. Expressed in the conidia, vegetative growth and induction growth stages.

The protein resides in the secreted. The protein localises to the cell wall. It localises to the cytoplasm. In terms of biological role, aerial growth, conidiation, and dispersal of filamentous fungi in the environment rely upon a capability of their secreting small amphipathic proteins called hydrophobins (HPBs) with low sequence identity. Class I can self-assemble into an outermost layer of rodlet bundles on aerial cell surfaces, conferring cellular hydrophobicity that supports fungal growth, development and dispersal; whereas Class II form highly ordered films at water-air interfaces through intermolecular interactions but contribute nothing to the rodlet structure. Hbf3 is a class II hydrophobin that has a role in vegetative growth and asexual development. The protein is Class II hydrophobin 3 of Hypocrea jecorina (strain QM6a) (Trichoderma reesei).